The chain runs to 720 residues: Long chain acyl-CoA synthetase 8 (720 aa).

The residue at position 1 (M1) is an N-acetylmethionine. An ATP-binding site is contributed by 279–290; sequence IMFTSGSTGLPK. The fatty acid-binding stretch occupies residues 554 to 582; it reads DEKGTRWFYTGDIGRFHPDGCLEVIDRKK.

The protein belongs to the ATP-dependent AMP-binding enzyme family. Mg(2+) is required as a cofactor.

The catalysed reaction is a long-chain fatty acid + ATP + CoA = a long-chain fatty acyl-CoA + AMP + diphosphate. Its pathway is lipid metabolism; fatty acid metabolism. Functionally, activation of long-chain fatty acids for both synthesis of cellular lipids, and degradation via beta-oxidation. Preferentially uses palmitate, palmitoleate, oleate and linoleate. In Arabidopsis thaliana (Mouse-ear cress), this protein is Long chain acyl-CoA synthetase 8 (LACS8).